Consider the following 78-residue polypeptide: Acyl carrier protein (78 aa).

The region spanning 2 to 77 is the Carrier domain; sequence STIEERVKKI…AAIDYINGHQ (76 aa). Residue Ser-37 is modified to O-(pantetheine 4'-phosphoryl)serine.

This sequence belongs to the acyl carrier protein (ACP) family. Post-translationally, 4'-phosphopantetheine is transferred from CoA to a specific serine of apo-ACP by AcpS. This modification is essential for activity because fatty acids are bound in thioester linkage to the sulfhydryl of the prosthetic group.

It is found in the cytoplasm. It functions in the pathway lipid metabolism; fatty acid biosynthesis. Functionally, carrier of the growing fatty acid chain in fatty acid biosynthesis. This chain is Acyl carrier protein, found in Shigella flexneri.